A 152-amino-acid polypeptide reads, in one-letter code: MKTFFLKEKQINKKWFVIDAEGLVVGRLAAFVATLLRGKHKPEYTPHMDCGDNVIIINAERVHFTGKKLKDKIYYKHTGYSGGLKKTTPDNILNGKFPERVIEMAVKRMLDDGPMARRRFENLYVYSGSEHKHQGQQPEKIDFASLNRKNKK.

It belongs to the universal ribosomal protein uL13 family. Part of the 50S ribosomal subunit.

This protein is one of the early assembly proteins of the 50S ribosomal subunit, although it is not seen to bind rRNA by itself. It is important during the early stages of 50S assembly. The protein is Large ribosomal subunit protein uL13 of Wolbachia pipientis wMel.